The chain runs to 416 residues: UDP-N-acetylglucosamine 1-carboxyvinyltransferase (416 aa).

Residue 22-23 (KN) coordinates phosphoenolpyruvate. R92 provides a ligand contact to UDP-N-acetyl-alpha-D-glucosamine. The active-site Proton donor is C116. At C116 the chain carries 2-(S-cysteinyl)pyruvic acid O-phosphothioketal. Residues 121-125 (RPVDQ), D304, and I326 each bind UDP-N-acetyl-alpha-D-glucosamine.

This sequence belongs to the EPSP synthase family. MurA subfamily.

Its subcellular location is the cytoplasm. The enzyme catalyses phosphoenolpyruvate + UDP-N-acetyl-alpha-D-glucosamine = UDP-N-acetyl-3-O-(1-carboxyvinyl)-alpha-D-glucosamine + phosphate. It participates in cell wall biogenesis; peptidoglycan biosynthesis. Cell wall formation. Adds enolpyruvyl to UDP-N-acetylglucosamine. The chain is UDP-N-acetylglucosamine 1-carboxyvinyltransferase from Cupriavidus necator (strain ATCC 17699 / DSM 428 / KCTC 22496 / NCIMB 10442 / H16 / Stanier 337) (Ralstonia eutropha).